The sequence spans 84 residues: Sec-independent protein translocase protein TatA (84 aa).

The helical transmembrane segment at 1–21 threads the bilayer; sequence MGGISIWQLLIVAVIVVLLFG. Basic and acidic residues-rich tracts occupy residues 42–55 and 64–84; these read AMSD…KTSQ and IADK…KEQV. The tract at residues 42–84 is disordered; that stretch reads AMSDDDAKQDKTSQDADFTAKSIADKQGEAKKEDAKSQDKEQV.

The protein belongs to the TatA/E family. The Tat system comprises two distinct complexes: a TatABC complex, containing multiple copies of TatA, TatB and TatC subunits, and a separate TatA complex, containing only TatA subunits. Substrates initially bind to the TatABC complex, which probably triggers association of the separate TatA complex to form the active translocon.

The protein resides in the cell inner membrane. Functionally, part of the twin-arginine translocation (Tat) system that transports large folded proteins containing a characteristic twin-arginine motif in their signal peptide across membranes. TatA could form the protein-conducting channel of the Tat system. This chain is Sec-independent protein translocase protein TatA, found in Salmonella typhi.